A 1663-amino-acid chain; its full sequence is Cortactin-binding protein 2 (1663 aa).

5 disordered regions span residues 1-23, 203-222, 367-440, 454-478, and 498-616; these read MATDGASCEPDLSRAPEDAAGAA, KKKTNELEEELSAEKRRSTE, GASV…LHPG, GNANDPDQNGNTTQSPPSRDVSPTS, and RFTS…PKPS. Positions 119–276 form a coiled coil; it reads KKMQERMSAQ…EQLKRGSDSK (158 aa). Positions 386 to 396 are enriched in low complexity; sequence PSTGSTPDPTS. Arginine 498 is subject to Asymmetric dimethylarginine. Residues 583 to 593 are compositionally biased toward polar residues; the sequence is TVASTPSSLPQ. ANK repeat units follow at residues 709–739, 743–772, 776–805, 809–838, 842–871, and 912–942; these read GRPTLLQQAAAQGNVTLLSMLLNEEGLDINY, DGHSALYSAAKNGHTDCVRLLLSAEAQVNA, NGFTPLCAAAAQGHFECVELLISYDANINH, GGQTPLYLACKNGNKECIKLLLEAGTNRSV, DGWTPVHAAVDTGNVDSLKLLMYHRIPAHG, and EGWTAAHIAASKGFKNCLEILCRHGGLEPER. The disordered stretch occupies residues 1449-1482; the sequence is KGESGAWRKVNTSPRRKSGRFSLPTWNKPDLSTE. Position 1524 is a phosphoserine (serine 1524). A disordered region spans residues 1581-1663; it reads QKEVSPLSSH…KNEHLEKPNK (83 aa). A compositionally biased stretch (polar residues) spans 1582–1599; the sequence is KEVSPLSSHQTTECSNSK. Positions 1624–1638 are enriched in low complexity; the sequence is SQNTKRSSSSSNTRQ. The segment covering 1639 to 1648 has biased composition (polar residues); sequence IEINNNSKEV. Over residues 1653-1663 the composition is skewed to basic and acidic residues; it reads HKNEHLEKPNK.

In terms of assembly, interacts with CTTN/cortactin SH3 domain. Interacts with STRN, STRN4/zinedin and MOB4/phocein; this interactions mediate the association with the STRIPAK core complex and may regulate dendritic spine distribution of the STRIPAK complex in hippocampal neurons. Activation of glutamate receptors weakens the interaction with STRN and STRN4. As to expression, highest expression in brain. Also expressed in kidney, pancreas, lung, heart, liver, skeletal muscle and placenta.

The protein resides in the cytoplasm. The protein localises to the cell cortex. Its subcellular location is the cell projection. It is found in the dendritic spine. Regulates the dendritic spine distribution of CTTN/cortactin in hippocampal neurons, and thus controls dendritic spinogenesis and dendritic spine maintenance. Associates with the striatin-interacting phosphatase and kinase (STRIPAK) core complex to regulate dendritic spine distribution of the STRIPAK complex in hippocampal neurons. The sequence is that of Cortactin-binding protein 2 from Homo sapiens (Human).